Here is a 177-residue protein sequence, read N- to C-terminus: Nuclear export protein (177 aa).

2 consecutive short sequence motifs (nuclear export signal) follow at residues 91–100 and 117–127; these read LWLPMKSLSL and MKHQILTRLKL.

Binds M1 protein. May interact with human nucleoporins and exportin XPO1/CRM1.

The protein resides in the virion. Its subcellular location is the host nucleus. Its function is as follows. Mediates the nuclear export of encapsidated genomic RNAs (ribonucleoproteins, RNPs). Acts as an adapter between viral RNPs complexes and the nuclear export machinery of the cell. Possesses no intrinsic RNA-binding activity, but includes a C-terminal M1-binding domain. This domain is believed to allow recognition of RNPs to which the M1 protein is bound. Because the M1 protein is not available in large quantities until the later stages of infection, such an indirect recognition mechanism probably ensures that genomic RNPs are not exported from the nucleus before sufficient quantities of viral mRNA and progeny genomic RNA have been synthesized. Furthermore, the RNPs enters the cytoplasm only when they have associated with the M1 protein that is necessary to guide them to the plasma membrane. May down-regulate viral RNA synthesis when overproduced. This Homo sapiens (Human) protein is Nuclear export protein (NS).